A 379-amino-acid polypeptide reads, in one-letter code: Elongation factor Ts, mitochondrial (379 aa).

The transit peptide at methionine 1–threonine 33 directs the protein to the mitochondrion.

This sequence belongs to the EF-Ts family.

It localises to the mitochondrion. Its function is as follows. Associates with the EF-Tu.GDP complex and induces the exchange of GDP to GTP. It remains bound to the aminoacyl-tRNA.EF-Tu.GTP complex up to the GTP hydrolysis stage on the ribosome. This is Elongation factor Ts, mitochondrial from Zea mays (Maize).